We begin with the raw amino-acid sequence, 1350 residues long: Spike glycoprotein (1350 aa).

The first 12 residues, 1–12 (MTRLMCLLMSLS), serve as a signal peptide directing secretion. Residues 13 to 1295 (IFVRGFDSQF…GNYTYYNKWP (1283 aa)) are Extracellular-facing. In terms of domain architecture, BetaCoV S1-NTD spans 21-356 (QFVDMSPASN…DDLSQLHCSY (336 aa)). N-linked (GlcNAc...) asparagine; by host glycans are attached at residues asparagine 30, asparagine 71, asparagine 111, asparagine 132, asparagine 162, asparagine 172, asparagine 227, and asparagine 241. Intrachain disulfides connect cysteine 191-cysteine 242 and cysteine 344-cysteine 354. A glycan (N-linked (GlcNAc...) asparagine; by host) is linked at asparagine 384. Residues 386-592 (TECDFSPMLT…GTGTDSVCPM (207 aa)) enclose the BetaCoV S1-CTD domain. An intrachain disulfide couples cysteine 388 to cysteine 412. Asparagine 415 is a glycosylation site (N-linked (GlcNAc...) asparagine; by host). Cystine bridges form between cysteine 430/cysteine 483 and cysteine 442/cysteine 590. Residues asparagine 492, asparagine 624, asparagine 723, asparagine 762, asparagine 773, asparagine 784, and asparagine 869 are each glycosylated (N-linked (GlcNAc...) asparagine; by host). 2 fusion peptide regions span residues 885–906 (SAIE…MQGY) and 904–926 (QGYD…AQYV). A disulfide bridge connects residues cysteine 909 and cysteine 922. A heptad repeat 1 region spans residues 991-1041 (QKLIANKFNQALGAMQTGFTTSNLAFSKVQDAVNANAQALSKLASELSNTF). The stretch at 1020 to 1064 (QDAVNANAQALSKLASELSNTFGAISSSISDILARLDTVEQDAQI) forms a coiled coil. Residues asparagine 1142, asparagine 1145, asparagine 1172, asparagine 1224, asparagine 1240, asparagine 1255, asparagine 1276, and asparagine 1287 are each glycosylated (N-linked (GlcNAc...) asparagine; by host). Positions 1245–1284 (GPNFAEISKINTTLLDLSDEMAILQEVVKQLNDSYIDLKE) are heptad repeat 2. Residues 1257-1285 (TLLDLSDEMAILQEVVKQLNDSYIDLKEL) are a coiled coil. The chain crosses the membrane as a helical span at residues 1296–1316 (WYIWLGFIAGLVALLLCVFFL). Topologically, residues 1317 to 1350 (LCCTGCGTSCLGKMKCKNCCDSYEEYDVEKIHVH) are cytoplasmic. Residues 1348-1350 (HVH) carry the KxHxx motif.

Belongs to the betacoronaviruses spike protein family. Homotrimer; each monomer consists of a S1 and a S2 subunit. The resulting peplomers protrude from the virus surface as spikes. Specific enzymatic cleavages in vivo yield mature proteins. In terms of processing, specific enzymatic cleavages in vivo yield mature proteins. The precursor is processed into S1 and S2 by host cell furin or another cellular protease to yield the mature S1 and S2 proteins. Additionally, a second cleavage leads to the release of a fusion peptide after viral attachment to host cell receptor. Post-translationally, the cytoplasmic Cys-rich domain is palmitoylated. Spike glycoprotein is digested within host endosomes.

It localises to the virion membrane. Its subcellular location is the host endoplasmic reticulum-Golgi intermediate compartment membrane. The protein resides in the host cell membrane. Functionally, attaches the virion to the cell membrane by interacting with host receptor, initiating the infection. Mediates fusion of the virion and cellular membranes by acting as a class I viral fusion protein. Under the current model, the protein has at least three conformational states: pre-fusion native state, pre-hairpin intermediate state, and post-fusion hairpin state. During viral and target cell membrane fusion, the coiled coil regions (heptad repeats) assume a trimer-of-hairpins structure, positioning the fusion peptide in close proximity to the C-terminal region of the ectodomain. The formation of this structure appears to drive apposition and subsequent fusion of viral and target cell membranes. Its function is as follows. Acts as a viral fusion peptide which is unmasked following S2 cleavage occurring upon virus endocytosis. The polypeptide is Spike glycoprotein (Tylonycteris pachypus (Lesser bamboo bat)).